The following is a 165-amino-acid chain: Endoribonuclease YbeY (165 aa).

Residues His130, His134, and His140 each contribute to the Zn(2+) site.

The protein belongs to the endoribonuclease YbeY family. Zn(2+) serves as cofactor.

It is found in the cytoplasm. Single strand-specific metallo-endoribonuclease involved in late-stage 70S ribosome quality control and in maturation of the 3' terminus of the 16S rRNA. This Streptococcus agalactiae serotype Ia (strain ATCC 27591 / A909 / CDC SS700) protein is Endoribonuclease YbeY.